The sequence spans 242 residues: Eukaryotic translation initiation factor 3 subunit J (242 aa).

Positions 1–10 are enriched in acidic residues; sequence MASWDDEDFE. 3 disordered regions span residues 1–58, 71–97, and 201–242; these read MASW…KAQR, MKLK…MMNA, and REEK…DDFM. A compositionally biased stretch (low complexity) spans 11–21; it reads VPAAATPAVPA. The span at 23–38 shows a compositional bias: acidic residues; that stretch reads WDDDEEEDVMDSWDAE. A compositionally biased stretch (basic and acidic residues) spans 71 to 89; sequence MKLKPEDASTKRDRQRQAE.

The protein belongs to the eIF-3 subunit J family. Component of the eukaryotic translation initiation factor 3 (eIF-3) complex.

Its subcellular location is the cytoplasm. Component of the eukaryotic translation initiation factor 3 (eIF-3) complex, which is involved in protein synthesis of a specialized repertoire of mRNAs and, together with other initiation factors, stimulates binding of mRNA and methionyl-tRNAi to the 40S ribosome. The eIF-3 complex specifically targets and initiates translation of a subset of mRNAs involved in cell proliferation. The polypeptide is Eukaryotic translation initiation factor 3 subunit J (Yarrowia lipolytica (strain CLIB 122 / E 150) (Yeast)).